The primary structure comprises 448 residues: Deoxyguanosinetriphosphate triphosphohydrolase-like protein (448 aa).

One can recognise an HD domain in the interval 67 to 260; sequence RLTHSLEVSQ…MELADDIAYG (194 aa).

This sequence belongs to the dGTPase family. Type 2 subfamily.

In Aliivibrio fischeri (strain ATCC 700601 / ES114) (Vibrio fischeri), this protein is Deoxyguanosinetriphosphate triphosphohydrolase-like protein.